The following is a 908-amino-acid chain: Translation initiation factor IF-2 (908 aa).

Positions 52–318 (QSHGQEEKRR…RSSQSSQHKF (267 aa)) are disordered. Residues 65–84 (KSKTTSTARVTGSSGKSKSV) show a composition bias toward polar residues. Basic and acidic residues-rich tracts occupy residues 94–108 (FEKP…ELAA), 120–138 (AAKD…EERQ), 176–185 (IEVKPKDQPK), 193–238 (PKVE…EQMR), 270–280 (SFEKERREIKR), and 294–303 (KNQDEREIKN). The tr-type G domain maps to 409–578 (TRPPVVTIMG…SLQAELMELE (170 aa)). The G1 stretch occupies residues 418–425 (GHVDHGKT). Residue 418–425 (GHVDHGKT) coordinates GTP. The interval 443–447 (GITQH) is G2. A G3 region spans residues 464–467 (DTPG). Residues 464-468 (DTPGH) and 518-521 (NKMD) contribute to the GTP site. Residues 518–521 (NKMD) form a G4 region. The G5 stretch occupies residues 554–556 (SAK).

Belongs to the TRAFAC class translation factor GTPase superfamily. Classic translation factor GTPase family. IF-2 subfamily.

The protein resides in the cytoplasm. In terms of biological role, one of the essential components for the initiation of protein synthesis. Protects formylmethionyl-tRNA from spontaneous hydrolysis and promotes its binding to the 30S ribosomal subunits. Also involved in the hydrolysis of GTP during the formation of the 70S ribosomal complex. This chain is Translation initiation factor IF-2, found in Psychrobacter cryohalolentis (strain ATCC BAA-1226 / DSM 17306 / VKM B-2378 / K5).